The following is a 187-amino-acid chain: Ribosome-recycling factor (187 aa).

Residues 141–169 (LKKGNKNGDFNDDEFHDLEKKVQNETDAG) are disordered.

The protein belongs to the RRF family.

The protein localises to the cytoplasm. Its function is as follows. Responsible for the release of ribosomes from messenger RNA at the termination of protein biosynthesis. May increase the efficiency of translation by recycling ribosomes from one round of translation to another. The sequence is that of Ribosome-recycling factor from Limosilactobacillus reuteri (strain DSM 20016) (Lactobacillus reuteri).